Consider the following 431-residue polypeptide: Aspartokinase (431 aa).

This sequence belongs to the aspartokinase family.

The enzyme catalyses L-aspartate + ATP = 4-phospho-L-aspartate + ADP. Its pathway is amino-acid biosynthesis; L-lysine biosynthesis via DAP pathway; (S)-tetrahydrodipicolinate from L-aspartate: step 1/4. It functions in the pathway amino-acid biosynthesis; L-methionine biosynthesis via de novo pathway; L-homoserine from L-aspartate: step 1/3. It participates in amino-acid biosynthesis; L-threonine biosynthesis; L-threonine from L-aspartate: step 1/5. The sequence is that of Aspartokinase (lysC) from Chlamydia trachomatis serovar D (strain ATCC VR-885 / DSM 19411 / UW-3/Cx).